A 67-amino-acid polypeptide reads, in one-letter code: DNA-directed RNA polymerase subunit omega (67 aa).

The protein belongs to the RNA polymerase subunit omega family. In terms of assembly, the RNAP catalytic core consists of 2 alpha, 1 beta, 1 beta' and 1 omega subunit. When a sigma factor is associated with the core the holoenzyme is formed, which can initiate transcription.

It carries out the reaction RNA(n) + a ribonucleoside 5'-triphosphate = RNA(n+1) + diphosphate. In terms of biological role, promotes RNA polymerase assembly. Latches the N- and C-terminal regions of the beta' subunit thereby facilitating its interaction with the beta and alpha subunits. This is DNA-directed RNA polymerase subunit omega from Legionella pneumophila (strain Paris).